Consider the following 402-residue polypeptide: Probable 2,3-bisphosphoglycerate-independent phosphoglycerate mutase (402 aa).

This sequence belongs to the BPG-independent phosphoglycerate mutase family. A-PGAM subfamily.

It catalyses the reaction (2R)-2-phosphoglycerate = (2R)-3-phosphoglycerate. It functions in the pathway carbohydrate degradation; glycolysis; pyruvate from D-glyceraldehyde 3-phosphate: step 3/5. Its function is as follows. Catalyzes the interconversion of 2-phosphoglycerate and 3-phosphoglycerate. This is Probable 2,3-bisphosphoglycerate-independent phosphoglycerate mutase from Thermosipho melanesiensis (strain DSM 12029 / CIP 104789 / BI429).